The primary structure comprises 475 residues: Aspartyl/glutamyl-tRNA(Asn/Gln) amidotransferase subunit B (475 aa).

Belongs to the GatB/GatE family. GatB subfamily. Heterotrimer of A, B and C subunits.

It carries out the reaction L-glutamyl-tRNA(Gln) + L-glutamine + ATP + H2O = L-glutaminyl-tRNA(Gln) + L-glutamate + ADP + phosphate + H(+). The catalysed reaction is L-aspartyl-tRNA(Asn) + L-glutamine + ATP + H2O = L-asparaginyl-tRNA(Asn) + L-glutamate + ADP + phosphate + 2 H(+). Its function is as follows. Allows the formation of correctly charged Asn-tRNA(Asn) or Gln-tRNA(Gln) through the transamidation of misacylated Asp-tRNA(Asn) or Glu-tRNA(Gln) in organisms which lack either or both of asparaginyl-tRNA or glutaminyl-tRNA synthetases. The reaction takes place in the presence of glutamine and ATP through an activated phospho-Asp-tRNA(Asn) or phospho-Glu-tRNA(Gln). The chain is Aspartyl/glutamyl-tRNA(Asn/Gln) amidotransferase subunit B from Staphylococcus aureus (strain MRSA252).